The sequence spans 195 residues: ATP-dependent Clp protease proteolytic subunit (195 aa).

Ser99 serves as the catalytic Nucleophile. His124 is a catalytic residue.

The protein belongs to the peptidase S14 family. As to quaternary structure, fourteen ClpP subunits assemble into 2 heptameric rings which stack back to back to give a disk-like structure with a central cavity, resembling the structure of eukaryotic proteasomes.

It localises to the cytoplasm. The enzyme catalyses Hydrolysis of proteins to small peptides in the presence of ATP and magnesium. alpha-casein is the usual test substrate. In the absence of ATP, only oligopeptides shorter than five residues are hydrolyzed (such as succinyl-Leu-Tyr-|-NHMec, and Leu-Tyr-Leu-|-Tyr-Trp, in which cleavage of the -Tyr-|-Leu- and -Tyr-|-Trp bonds also occurs).. Cleaves peptides in various proteins in a process that requires ATP hydrolysis. Has a chymotrypsin-like activity. Plays a major role in the degradation of misfolded proteins. This is ATP-dependent Clp protease proteolytic subunit from Coxiella burnetii (strain CbuG_Q212) (Coxiella burnetii (strain Q212)).